The following is a 971-amino-acid chain: Translation initiation factor IF-2 (971 aa).

Basic and acidic residues predominate over residues 48 to 63; the sequence is DHLRKSHGATDGDKRK. 2 disordered regions span residues 48–86 and 101–381; these read DHLRKSHGATDGDKRKITLTRKHTSEIKQSDATGKARTI and DVAE…STFQ. Residues 105-114 are compositionally biased toward low complexity; the sequence is GADQGQAQVA. Over residues 121 to 181 the composition is skewed to basic and acidic residues; that stretch reads ELKRREEEAR…EEEAATKRAA (61 aa). The span at 182–203 shows a compositional bias: low complexity; sequence AEAAAAQQQAAAQQAAAEQEAT. The segment covering 210–261 has biased composition (basic and acidic residues); the sequence is DEARAAAERAAQREAAKKAEDAAREAADKARAEQEEISKRRAAAEAEARAIR. A compositionally biased stretch (pro residues) spans 277-286; it reads PPKPVEPPKP. Residues 304–326 are compositionally biased toward low complexity; the sequence is ARPAVKKPAGAAAPATTQAPAGA. Gly residues predominate over residues 356–369; sequence SSGGVDRGWRGGPK. Residues 471–640 enclose the tr-type G domain; that stretch reads PRPPVVTVMG…LLQAEVLELK (170 aa). The segment at 480-487 is G1; it reads GHVDHGKT. Residue 480-487 participates in GTP binding; the sequence is GHVDHGKT. The tract at residues 505-509 is G2; the sequence is GITQH. Residues 526–529 are G3; the sequence is DTPG. GTP-binding positions include 526-530 and 580-583; these read DTPGH and NKID. The G4 stretch occupies residues 580–583; that stretch reads NKID. The interval 616–618 is G5; it reads SAK.

It belongs to the TRAFAC class translation factor GTPase superfamily. Classic translation factor GTPase family. IF-2 subfamily.

Its subcellular location is the cytoplasm. Functionally, one of the essential components for the initiation of protein synthesis. Protects formylmethionyl-tRNA from spontaneous hydrolysis and promotes its binding to the 30S ribosomal subunits. Also involved in the hydrolysis of GTP during the formation of the 70S ribosomal complex. The chain is Translation initiation factor IF-2 from Burkholderia orbicola (strain MC0-3).